A 188-amino-acid chain; its full sequence is Elongation factor P (188 aa).

This sequence belongs to the elongation factor P family.

It localises to the cytoplasm. It participates in protein biosynthesis; polypeptide chain elongation. Its function is as follows. Involved in peptide bond synthesis. Stimulates efficient translation and peptide-bond synthesis on native or reconstituted 70S ribosomes in vitro. Probably functions indirectly by altering the affinity of the ribosome for aminoacyl-tRNA, thus increasing their reactivity as acceptors for peptidyl transferase. This Streptomyces avermitilis (strain ATCC 31267 / DSM 46492 / JCM 5070 / NBRC 14893 / NCIMB 12804 / NRRL 8165 / MA-4680) protein is Elongation factor P.